The primary structure comprises 466 residues: tRNA dimethylallyltransferase 2 (466 aa).

Residue 27–34 participates in ATP binding; it reads GPTGSGKS. 29 to 34 contributes to the substrate binding site; it reads TGSGKS. Residues 52–55 form an interaction with substrate tRNA region; sequence DAMQ. Residues 433-466 form a disordered region; it reads WEHHKQGRTHRKRTTRHKNSQTYKNREVQEAEVN. A compositionally biased stretch (basic residues) spans 437-451; that stretch reads KQGRTHRKRTTRHKN. Positions 456–466 are enriched in basic and acidic residues; that stretch reads KNREVQEAEVN.

Belongs to the IPP transferase family. The cofactor is Mg(2+). Expressed ubiquitously, with highest expression in proliferating tissues.

It localises to the cytoplasm. It catalyses the reaction adenosine(37) in tRNA + dimethylallyl diphosphate = N(6)-dimethylallyladenosine(37) in tRNA + diphosphate. Its function is as follows. Catalyzes the transfer of a dimethylallyl group onto the adenine at position 37 in tRNAs that read codons beginning with uridine, leading to the formation of N6-(dimethylallyl)adenosine (i(6)A). Involved in the cis-type cytokinin biosynthesis. The protein is tRNA dimethylallyltransferase 2 (IPT2) of Arabidopsis thaliana (Mouse-ear cress).